Consider the following 201-residue polypeptide: Ran-specific GTPase-activating protein 1 (201 aa).

Basic and acidic residues-rich tracts occupy residues 1–17 (MSSE…EEAA) and 32–66 (KKAE…IHFE). The segment at 1–66 (MSSEDKKPVV…APESPDIHFE (66 aa)) is disordered. S60 bears the Phosphoserine mark. The RanBD1 domain maps to 64–200 (HFEPVVHLEK…FEKAQEINKK (137 aa)).

Belongs to the RANBP1 family. As to quaternary structure, interacts with GSP1 and PRP20.

The protein localises to the cytoplasm. It is found in the nucleus. Important for the export of protein containing nuclear export signal (NES) out of the nucleus. Stimulates the GTPase activity of GSP1 and GSP2. This is Ran-specific GTPase-activating protein 1 (YRB1) from Saccharomyces cerevisiae (strain ATCC 204508 / S288c) (Baker's yeast).